A 90-amino-acid chain; its full sequence is Probable Fe(2+)-trafficking protein (90 aa).

This sequence belongs to the Fe(2+)-trafficking protein family.

Could be a mediator in iron transactions between iron acquisition and iron-requiring processes, such as synthesis and/or repair of Fe-S clusters in biosynthetic enzymes. This chain is Probable Fe(2+)-trafficking protein, found in Colwellia psychrerythraea (strain 34H / ATCC BAA-681) (Vibrio psychroerythus).